A 944-amino-acid chain; its full sequence is Nonsense-mediated mRNA decay factor SMG8 (944 aa).

2 disordered regions span residues 560–597 (NTGKSGAPQDEDAGEDEAEEEEGQERELPTKKKLQNTA) and 628–653 (QASSEQLSNSEQNTTSSGTSSADTEN). Positions 568 to 583 (QDEDAGEDEAEEEEGQ) are enriched in acidic residues. Over residues 628-650 (QASSEQLSNSEQNTTSSGTSSAD) the composition is skewed to polar residues.

It belongs to the SMG8 family.

Involved in nonsense-mediated decay (NMD) of mRNAs containing premature stop codons. Probable component of kinase complex containing nonC and recruited to stalled ribosomes. The chain is Nonsense-mediated mRNA decay factor SMG8 from Drosophila simulans (Fruit fly).